Reading from the N-terminus, the 510-residue chain is GTPase Der (510 aa).

2 consecutive EngA-type G domains span residues 4-168 (PVVA…AEKM) and 222-395 (IKIA…ACAT). Residues 10–17 (GRPNVGKS), 57–61 (DTGGI), 120–123 (NKTD), 228–235 (GRPNVGKS), 275–279 (DTAGV), and 340–343 (NKWD) contribute to the GTP site. In terms of domain architecture, KH-like spans 396–480 (QKMTTSMLTR…PIRLLFQEGN (85 aa)).

The protein belongs to the TRAFAC class TrmE-Era-EngA-EngB-Septin-like GTPase superfamily. EngA (Der) GTPase family. In terms of assembly, associates with the 50S ribosomal subunit.

Its function is as follows. GTPase that plays an essential role in the late steps of ribosome biogenesis. This chain is GTPase Der, found in Pasteurella multocida (strain Pm70).